Here is a 537-residue protein sequence, read N- to C-terminus: MAQKPLRLLACGDVEGKFDVLFNRVRTIQKKSGNFDLLLCVGNFFGSAQDAEWEEYKTGNKKAPIQTYVLGANNEETANYFQGADGCELAENITYLGRKGVFTGSSGLQIVYLSGTESLDEPVPAHSFSPKDVSSLRTMLCSASQFKGVDILLTSPWPKYVGSFGNSSGEVDTKNCGSALISSLAVSLKPRYHFAALEKSYYERLPYRNHVVLQESAQHATRFIALANVGNPEKKKYLYAFSIVPMKLMAVAELVKQPPDVTENPYRDSGKQAAGGKHIPAPQEESACQFFFDLSEKQGRKRPSTGRDTRPPHAKQPRKPPQPPGPCWFCLASPEVEKHLVVNIGTHCYLALAKGGLSDDHVLILPIGHYQSVVELSAEVVEEVEKYKATLQRFFKSRGKRCVLFERNYRSHHLQLQVIPVPLSCCATDDIKDAFITQAQEQQIELLEIPEHSDIKQIAQPGAAYFYVELDTGEKLFHRIKKNFPLQFGREVLASEAILNIPEKADWRQCQTSKDEEEALARRFRKDFEPFDFTLDD.

A disordered region spans residues 297 to 323 (KQGRKRPSTGRDTRPPHAKQPRKPPQP).

Belongs to the CWF19 family.

In Mus musculus (Mouse), this protein is CWF19-like protein 1 (Cwf19l1).